The primary structure comprises 1348 residues: Kinesin-like protein KIF7 (1348 aa).

Positions P15–I349 constitute a Kinesin motor domain. G94 to T101 is a binding site for ATP. The segment at H358–G479 is interaction with DLG5. The segment at H358 to E1211 is interaction with SMO. Disordered stretches follow at residues R451 to T486 and A607 to E674. Residues R480 to Q542 are a coiled coil. Residues S620–E636 are compositionally biased toward acidic residues. 2 coiled-coil regions span residues A698 to L1057 and F1109 to E1211. S903 bears the Phosphoserine mark. Disordered regions lie at residues L1288–M1314 and K1328–L1348.

The protein belongs to the TRAFAC class myosin-kinesin ATPase superfamily. Kinesin family. In terms of assembly, can form homodimers and interacts with microtubules. Interacts with GLI1 and SMO. Interacts with GLI2, GLI3 and SUFU. Interacts with NPHP1. Interacts with SMO and DLG5 (via PDZ4 or guanylate kinase-like domain). Post-translationally, polyubiquitinated by UBR3. As to expression, expressed in heart, lung, liver, kidney, testis, spleen and cerebellum.

The protein resides in the cell projection. The protein localises to the cilium. Its subcellular location is the cytoplasm. It localises to the cytoskeleton. It is found in the cilium basal body. In terms of biological role, essential for hedgehog signaling regulation: acts both as a negative and a positive regulator of sonic hedgehog (Shh) and Indian hedgehog (Ihh) pathways, acting downstream of SMO, through both SUFU-dependent and -independent mechanisms. Involved in the regulation of microtubular dynamics. Required for proper organization of the ciliary tip and control of ciliary localization of SUFU-GLI2 complexes. Required for localization of GLI3 to cilia in response to Shh. Negatively regulates Shh signaling by preventing inappropriate activation of the transcriptional activator GLI2 in the absence of ligand. Positively regulates Shh signaling by preventing the processing of the transcription factor GLI3 into its repressor form. In keratinocytes, promotes the dissociation of SUFU-GLI2 complexes, GLI2 nuclear translocation and Shh signaling activation. Involved in the regulation of epidermal differentiation and chondrocyte development. The sequence is that of Kinesin-like protein KIF7 (Kif7) from Mus musculus (Mouse).